The chain runs to 85 residues: Small ribosomal subunit protein uS17 (85 aa).

Belongs to the universal ribosomal protein uS17 family. Part of the 30S ribosomal subunit.

In terms of biological role, one of the primary rRNA binding proteins, it binds specifically to the 5'-end of 16S ribosomal RNA. This is Small ribosomal subunit protein uS17 from Syntrophus aciditrophicus (strain SB).